Reading from the N-terminus, the 73-residue chain is uncharacterized protein (73 aa).

This is an uncharacterized protein from Schizosaccharomyces pombe (strain 972 / ATCC 24843) (Fission yeast).